A 332-amino-acid polypeptide reads, in one-letter code: Glycerol-3-phosphate dehydrogenase [NAD(P)+] (332 aa).

Residues Trp-11, Arg-30, and Lys-108 each contribute to the NADPH site. Sn-glycerol 3-phosphate is bound by residues Lys-108, Gly-137, and Ser-139. Residue Ala-141 coordinates NADPH. The sn-glycerol 3-phosphate site is built by Lys-192, Asp-245, Ser-255, Arg-256, and Asn-257. The active-site Proton acceptor is the Lys-192. NADPH is bound at residue Arg-256. NADPH-binding residues include Val-280 and Glu-282.

This sequence belongs to the NAD-dependent glycerol-3-phosphate dehydrogenase family.

The protein resides in the cytoplasm. It carries out the reaction sn-glycerol 3-phosphate + NAD(+) = dihydroxyacetone phosphate + NADH + H(+). The enzyme catalyses sn-glycerol 3-phosphate + NADP(+) = dihydroxyacetone phosphate + NADPH + H(+). It participates in membrane lipid metabolism; glycerophospholipid metabolism. Functionally, catalyzes the reduction of the glycolytic intermediate dihydroxyacetone phosphate (DHAP) to sn-glycerol 3-phosphate (G3P), the key precursor for phospholipid synthesis. This is Glycerol-3-phosphate dehydrogenase [NAD(P)+] from Burkholderia mallei (strain ATCC 23344).